The following is a 152-amino-acid chain: UPF0178 protein CKL_3490 (152 aa).

This sequence belongs to the UPF0178 family.

This Clostridium kluyveri (strain ATCC 8527 / DSM 555 / NBRC 12016 / NCIMB 10680 / K1) protein is UPF0178 protein CKL_3490.